The sequence spans 117 residues: MVKKNTKVSNKYIIDATAAVNDKIFDVAAFEKYLIDRIKVDGKTGNLGSSVVVSREGSSKIAVIAHIDFSGRYLKYLTKKFLKKHSLRDWLRVVSTKKGVYELRYYNVVVGNDEEEQ.

Residues Ser-49 and Ser-50 each carry the phosphoserine modification.

It belongs to the eukaryotic ribosomal protein eL22 family. In terms of assembly, component of the large ribosomal subunit (LSU). Mature yeast ribosomes consist of a small (40S) and a large (60S) subunit. The 40S small subunit contains 1 molecule of ribosomal RNA (18S rRNA) and at least 33 different proteins. The large 60S subunit contains 3 rRNA molecules (25S, 5.8S and 5S rRNA) and at least 46 different proteins.

Its subcellular location is the cytoplasm. It localises to the nucleus. It is found in the nucleolus. Functionally, component of the ribosome, a large ribonucleoprotein complex responsible for the synthesis of proteins in the cell. The small ribosomal subunit (SSU) binds messenger RNAs (mRNAs) and translates the encoded message by selecting cognate aminoacyl-transfer RNA (tRNA) molecules. The large subunit (LSU) contains the ribosomal catalytic site termed the peptidyl transferase center (PTC), which catalyzes the formation of peptide bonds, thereby polymerizing the amino acids delivered by tRNAs into a polypeptide chain. The nascent polypeptides leave the ribosome through a tunnel in the LSU and interact with protein factors that function in enzymatic processing, targeting, and the membrane insertion of nascent chains at the exit of the ribosomal tunnel. This Schizosaccharomyces pombe (strain 972 / ATCC 24843) (Fission yeast) protein is Large ribosomal subunit protein eL22 (rpl22).